Consider the following 280-residue polypeptide: MLERAQRTLKRKVHYSGVGIHFGKSATLTLEPAEENTGIVFYRSDLLGDRIPALLPHVCNTGRSTTLSSGDSVIATVEHLMAALRSSNIDNVIVRCGEEEIPIGDGSSHVFMQLIDEAGICTQNDTVPIAKLARPVYYQTQDTFLAAFPCDELKISYTLHYPQSPTIGTQYRSFVITEESFRKEIAPCRTFALYNELCFLMDRGLIRGGCLENAVVFKDDGIISLGQLRFPDEPVRHKILDLIGDLSLVGRPFVAHIVAVGSGHSSNIALGRKILEELQP.

Zn(2+) contacts are provided by His-79, His-237, and Asp-241. Residue His-264 is the Proton donor of the active site.

The protein belongs to the LpxC family. Zn(2+) serves as cofactor.

It catalyses the reaction a UDP-3-O-[(3R)-3-hydroxyacyl]-N-acetyl-alpha-D-glucosamine + H2O = a UDP-3-O-[(3R)-3-hydroxyacyl]-alpha-D-glucosamine + acetate. It functions in the pathway glycolipid biosynthesis; lipid IV(A) biosynthesis; lipid IV(A) from (3R)-3-hydroxytetradecanoyl-[acyl-carrier-protein] and UDP-N-acetyl-alpha-D-glucosamine: step 2/6. Catalyzes the hydrolysis of UDP-3-O-myristoyl-N-acetylglucosamine to form UDP-3-O-myristoylglucosamine and acetate, the committed step in lipid A biosynthesis. In Chlamydia felis (strain Fe/C-56) (Chlamydophila felis), this protein is UDP-3-O-acyl-N-acetylglucosamine deacetylase.